We begin with the raw amino-acid sequence, 363 residues long: Protein-glutamate methylesterase/protein-glutamine glutaminase of group 3 operon (363 aa).

One can recognise a Response regulatory domain in the interval 7–124 (RVLIVDDSAS…RQALMESSGR (118 aa)). A 4-aspartylphosphate modification is found at D58. Residues 166 to 357 (PTTERIVCIG…REIMAWQQAK (192 aa)) enclose the CheB-type methylesterase domain. Catalysis depends on residues S177, H203, and D299.

This sequence belongs to the CheB family. Post-translationally, phosphorylated by CheA. Phosphorylation of the N-terminal regulatory domain activates the methylesterase activity.

The protein resides in the cytoplasm. The enzyme catalyses [protein]-L-glutamate 5-O-methyl ester + H2O = L-glutamyl-[protein] + methanol + H(+). It carries out the reaction L-glutaminyl-[protein] + H2O = L-glutamyl-[protein] + NH4(+). In terms of biological role, involved in chemotaxis. Part of a chemotaxis signal transduction system that modulates chemotaxis in response to various stimuli. Catalyzes the demethylation of specific methylglutamate residues introduced into the chemoreceptors (methyl-accepting chemotaxis proteins or MCP) by CheR. Also mediates the irreversible deamidation of specific glutamine residues to glutamic acid. This chain is Protein-glutamate methylesterase/protein-glutamine glutaminase of group 3 operon, found in Rhodopseudomonas palustris (strain ATCC BAA-98 / CGA009).